Consider the following 149-residue polypeptide: Calmodulin-1 (149 aa).

Ala-2 carries the post-translational modification N-acetylalanine. 4 EF-hand domains span residues 8-43 (DQIAEFKEAFSLFDKDGDGCITTKELGTVMRSLGQN), 44-79 (PTEAELQDMINEVDADGNGTIDFPEFLNLMARKMKD), 81-116 (DSEEELKEAFRVFDKDQNGFISAAELRHVMTNLGEK), and 117-149 (LTDEEVDEMIREADVDGDGQINYEEFVKVMMAK). Residues Asp-21, Asp-23, Asp-25, Cys-27, Glu-32, Asp-57, Asp-59, Asn-61, Thr-63, Glu-68, Asp-94, Asp-96, Asn-98, and Glu-105 each contribute to the Ca(2+) site. Position 116 is an N6,N6,N6-trimethyllysine (Lys-116). Residues Asp-130, Asp-132, Asp-134, Gln-136, and Glu-141 each contribute to the Ca(2+) site.

Belongs to the calmodulin family.

Its function is as follows. Calmodulin mediates the control of a large number of enzymes, ion channels and other proteins by Ca(2+). Among the enzymes to be stimulated by the calmodulin-Ca(2+) complex are a number of protein kinases and phosphatases. In Oryza sativa subsp. indica (Rice), this protein is Calmodulin-1 (CAM1-1).